Here is a 404-residue protein sequence, read N- to C-terminus: MSDIKKVVLAYSGGLDTSVILKWLQVTYNCEVVTFTADLGQGEELEPARAKAKLMGVPDHHIYIDDLREEFVRDFVFPMMRANARYEGDYLLGTSIARPLISKRLIEIARETGADAVAHGATGKGNDQVRFELSAYALEPGIKVIAPWREWDLTSRTALIAWAEAHQIPVPKDKRGESPFSTDANLLHTSSEGKVLEDPWQETPDYVYSRTVNPEDAPDTPEYITIDFEKGDGVALNGEAMSPATLLAALNDLGRKHGIGRLDLVENRFVGMKSRGMYETPGGEIYARAHRGIESITLDRGAAHLKDELMPKYAELIYNGFWFSPEREMLQAAIDHSQARVNGTVRLKLYKGSASVVGRKSPDSLYSERHVTFEDDAGAYDQKDAAGFIKLNALRLRLLAQQGR.

Residues alanine 10–serine 18 and alanine 37 each bind ATP. 2 residues coordinate L-citrulline: tyrosine 90 and serine 95. Residue glycine 120 coordinates ATP. The L-aspartate site is built by threonine 122, asparagine 126, and aspartate 127. Residue asparagine 126 coordinates L-citrulline. L-citrulline-binding residues include arginine 130, serine 181, serine 190, glutamate 266, and tyrosine 278. Residues aspartate 173–tryptophan 200 form a disordered region. The span at proline 179–glutamate 192 shows a compositional bias: polar residues.

The protein belongs to the argininosuccinate synthase family. Type 1 subfamily. In terms of assembly, homotetramer.

Its subcellular location is the cytoplasm. It catalyses the reaction L-citrulline + L-aspartate + ATP = 2-(N(omega)-L-arginino)succinate + AMP + diphosphate + H(+). It functions in the pathway amino-acid biosynthesis; L-arginine biosynthesis; L-arginine from L-ornithine and carbamoyl phosphate: step 2/3. This Novosphingobium aromaticivorans (strain ATCC 700278 / DSM 12444 / CCUG 56034 / CIP 105152 / NBRC 16084 / F199) protein is Argininosuccinate synthase.